Reading from the N-terminus, the 879-residue chain is Phosphoenolpyruvate carboxylase (879 aa).

Catalysis depends on residues histidine 141 and lysine 546.

It belongs to the PEPCase type 1 family. Mg(2+) is required as a cofactor.

It carries out the reaction oxaloacetate + phosphate = phosphoenolpyruvate + hydrogencarbonate. Its function is as follows. Forms oxaloacetate, a four-carbon dicarboxylic acid source for the tricarboxylic acid cycle. This chain is Phosphoenolpyruvate carboxylase, found in Stutzerimonas stutzeri (strain A1501) (Pseudomonas stutzeri).